Consider the following 492-residue polypeptide: MANYFNTLNLRNQLAQLGKCRFMAREEFADEASYLKGKKVVIVGCGAQGLNQGLNMRDSGLDIAYALRAEAIAEKRASWRKATENGFKVGTYEELIPQADLVVNLTPDKQHTSVVQAVQPLMKDGAALGYSHGFNIVEVGEQVRKDVTVVMVAPKCPGTEVREEYKRGFGVPTLIAVHPENDPKGEGMAIAKAWAAATGGHRAGVLESSFVAEVKSDLMGEQTILCGMLQAGSLLCFDKLVAEGTDAAYAEKLIQFGWETITEALKQGGITLMMDRLSNPAKVRAYALSEQLKTIMAPLFQKHMDDIISGEFSSGMMADWANDDKKLLGWREETGKTAFETAAQFEGKIGEQDYFDQGVVMIAMVKAGVELAFETMVAAGIVEESAYYESLHELPLIANTIARKRLYEMNVVISDTAEYGNYLFSYAAVPLLQEFMTTLQAGDLGKQAQTSTSVDNAQLRDVNEAIRHHDIETVGRKLRGYMTDMKRIAVAG.

The KARI N-terminal Rossmann domain maps to A15–S208. Residues C45–Q48, R68, R76, S78, and D108–Q110 each bind NADP(+). H132 is an active-site residue. G158 serves as a coordination point for NADP(+). 2 consecutive KARI C-terminal knotted domains span residues S209–Q344 and F345–M485. Mg(2+)-binding residues include D217, E221, E389, and E393. S414 is a substrate binding site.

The protein belongs to the ketol-acid reductoisomerase family. It depends on Mg(2+) as a cofactor.

The enzyme catalyses (2R)-2,3-dihydroxy-3-methylbutanoate + NADP(+) = (2S)-2-acetolactate + NADPH + H(+). It carries out the reaction (2R,3R)-2,3-dihydroxy-3-methylpentanoate + NADP(+) = (S)-2-ethyl-2-hydroxy-3-oxobutanoate + NADPH + H(+). The protein operates within amino-acid biosynthesis; L-isoleucine biosynthesis; L-isoleucine from 2-oxobutanoate: step 2/4. It functions in the pathway amino-acid biosynthesis; L-valine biosynthesis; L-valine from pyruvate: step 2/4. In terms of biological role, involved in the biosynthesis of branched-chain amino acids (BCAA). Catalyzes an alkyl-migration followed by a ketol-acid reduction of (S)-2-acetolactate (S2AL) to yield (R)-2,3-dihydroxy-isovalerate. In the isomerase reaction, S2AL is rearranged via a Mg-dependent methyl migration to produce 3-hydroxy-3-methyl-2-ketobutyrate (HMKB). In the reductase reaction, this 2-ketoacid undergoes a metal-dependent reduction by NADPH to yield (R)-2,3-dihydroxy-isovalerate. In Erwinia tasmaniensis (strain DSM 17950 / CFBP 7177 / CIP 109463 / NCPPB 4357 / Et1/99), this protein is Ketol-acid reductoisomerase (NADP(+)).